Reading from the N-terminus, the 445-residue chain is Anthranilate N-benzoyltransferase protein 1 (445 aa).

Active-site proton acceptor residues include H164 and D392.

Belongs to the plant acyltransferase family. Post-translationally, N-terminus is blocked.

The enzyme catalyses anthranilate + benzoyl-CoA = N-benzoylanthranilate + CoA. The protein operates within phytoalexin biosynthesis; methoxydianthramide B biosynthesis. Catalyzes the formation of N-benzoylanthranilate, in the course of methoxydianthramide B, a phytoalexin. Phytoalexins are produced in response to infection by parasites, and are essential for the expression of disease resistance. The polypeptide is Anthranilate N-benzoyltransferase protein 1 (HCBT1) (Dianthus caryophyllus (Carnation)).